Reading from the N-terminus, the 642-residue chain is MSYTGFVQGSETTLQSTYCDTSAQPTCDYGYGTWNSGTNRGYENYGYGYGYGQDNTTNYGYGMATSHSWEMASSDTNANPSASGSASADSVLSRINQRLDMMPHLETDMIQGGVYGSGGGERYDSYEACDSRAILSERDLYRSSYDYGELDPEMEMAYEGQYDAYRDQFRMRGGDTFGPRAQGWARDARSGRPMASGYGRMWEDPMGARGQCMPGASRLPSLFSQNIIPEYGMFQGMRGGGAFSGGSRFGFGFGNGMKQMRRTWKTWTTADFRTKKKKRKQGGSPDEPDSKATRTDCSDNSDSDNDEGTEGEAAEGTESAEAMEKGSRVDGEDEEGKEDGREEGKEDPEKGALTAQDESSQAKRKLQASKKSQDKQKKRQRDRMVERIQFVCSLCKYRTFYEDEMGSHLDSKFHKEHFKYVGTKLPKQTADFLQEYVTNKTKKTEELRKTVEDLDGLIQQIYRDQDLTQEIAMEHFVKKVEAAHCAACDLFIPMQFGIIQKHLKTMDHNRNRRLMMEQSKKSSLMVARSILNNKLISKKLERYLKGENPFTDNPEEEKEQDEVEAGALDEGAPSEATELTEGVPAQPPVPLEPAPGTTTPPPPPPPEEEESPVPLLGGALQCQIRGIPGLDMEDDEEGGGGP.

Residues 1 to 269 (MSYTGFVQGS…MRRTWKTWTT (269 aa)) are sufficient for activation of CTE-mediated expression. Arg209 is subject to Asymmetric dimethylarginine; alternate. Arg209 is modified (omega-N-methylarginine; alternate). An omega-N-methylarginine mark is found at Arg218, Arg238, and Arg248. Lys258 is subject to N6-acetyllysine. The interval 265 to 382 (KTWTTADFRT…QDKQKKRQRD (118 aa)) is disordered. Thr268 carries the phosphothreonine modification. The Nuclear localization signal motif lies at 275–280 (KKKKRK). Positions 281–297 (QGGSPDEPDSKATRTDC) match the Nuclear export signal (NES) motif. Ser284 carries the phosphoserine modification. Basic and acidic residues predominate over residues 288–297 (PDSKATRTDC). Thr293 is subject to Phosphothreonine. A Phosphoserine modification is found at Ser298. A compositionally biased stretch (acidic residues) spans 299-315 (DNSDSDNDEGTEGEAAE). A compositionally biased stretch (basic and acidic residues) spans 338 to 350 (EDGREEGKEDPEK). The short motif at 363-365 (KRK) is the Nuclear localization signal element. C2H2 AKAP95-type zinc fingers lie at residues 392 to 414 (CSLCKYRTFYEDEMGSHLDSKFH) and 485 to 508 (CAACDLFIPMQFGIIQKHLKTMDH). The disordered stretch occupies residues 546–642 (GENPFTDNPE…EDDEEGGGGP (97 aa)). A compositionally biased stretch (acidic residues) spans 553–564 (NPEEEKEQDEVE). Pro residues predominate over residues 585–605 (AQPPVPLEPAPGTTTPPPPPP). Positions 631-642 (DMEDDEEGGGGP) are enriched in acidic residues.

The protein belongs to the AKAP95 family. Interacts (via N-terminus) with DHX9 (via RGG region). Interacts with TMPO isoform Beta, PRPF40A, RNF43, lamin-B. Interacts with HDAC3; increased during mitosis. Phosphorylated on serine or threonine residues possibly by PKA.

The protein resides in the nucleus. It is found in the nucleus matrix. It localises to the nucleus speckle. Its subcellular location is the PML body. The protein localises to the cytoplasm. Its function is as follows. Could play a role in constitutive transport element (CTE)-mediated gene expression by association with DHX9. Increases CTE-dependent nuclear unspliced mRNA export. Proposed to target PRKACA to the nucleus but does not seem to be implicated in the binding of regulatory subunit II of PKA. May be involved in nuclear envelope breakdown and chromatin condensation. May be involved in anchoring nuclear membranes to chromatin in interphase and in releasing membranes from chromating at mitosis. May regulate the initiation phase of DNA replication when associated with TMPO isoform Beta. Required for cell cycle G2/M transition and histone deacetylation during mitosis. In mitotic cells recruits HDAC3 to the vicinity of chromatin leading to deacetylation and subsequent phosphorylation at 'Ser-10' of histone H3; in this function seems to act redundantly with AKAP8. May be involved in regulation of pre-mRNA splicing. The sequence is that of A-kinase anchor protein 8-like (Akap8l) from Mus musculus (Mouse).